We begin with the raw amino-acid sequence, 279 residues long: Biotin synthase (279 aa).

The region spanning lysine 2–arginine 228 is the Radical SAM core domain. [4Fe-4S] cluster-binding residues include cysteine 17, cysteine 21, and cysteine 24. [2Fe-2S] cluster-binding residues include cysteine 61, cysteine 96, cysteine 154, and arginine 221.

It belongs to the radical SAM superfamily. Biotin synthase family. In terms of assembly, homodimer. The cofactor is [4Fe-4S] cluster. Requires [2Fe-2S] cluster as cofactor.

The catalysed reaction is (4R,5S)-dethiobiotin + (sulfur carrier)-SH + 2 reduced [2Fe-2S]-[ferredoxin] + 2 S-adenosyl-L-methionine = (sulfur carrier)-H + biotin + 2 5'-deoxyadenosine + 2 L-methionine + 2 oxidized [2Fe-2S]-[ferredoxin]. It participates in cofactor biosynthesis; biotin biosynthesis; biotin from 7,8-diaminononanoate: step 2/2. In terms of biological role, catalyzes the conversion of dethiobiotin (DTB) to biotin by the insertion of a sulfur atom into dethiobiotin via a radical-based mechanism. In Campylobacter concisus (strain 13826), this protein is Biotin synthase.